Reading from the N-terminus, the 61-residue chain is Cytotoxin homolog 2 (61 aa).

Intrachain disulfides connect cysteine 3/cysteine 22, cysteine 15/cysteine 39, cysteine 43/cysteine 54, and cysteine 55/cysteine 60.

This sequence belongs to the three-finger toxin family. Short-chain subfamily. Orphan group XV sub-subfamily. In terms of tissue distribution, expressed by the venom gland.

The protein localises to the secreted. The protein resides in the target cell membrane. Has low cytotoxic activity. The chain is Cytotoxin homolog 2 from Naja melanoleuca (Forest cobra).